The primary structure comprises 171 residues: Zinc finger A20 and AN1 domain-containing stress-associated protein 8 (171 aa).

The A20-type zinc finger occupies 11–45 (PEGPILCINNCGFFGSAATMNMCSKCHKEMIMKQE). Zn(2+)-binding residues include cysteine 17, cysteine 21, cysteine 33, cysteine 36, cysteine 112, cysteine 115, cysteine 126, cysteine 128, cysteine 133, histidine 136, histidine 142, and cysteine 144. The AN1-type zinc finger occupies 106–152 (REGPNRCSTCRKRVGLTGFNCRCGNLYCAMHRYSDKHDCQFDYRTAA).

May be involved in environmental stress response. In Oryza sativa subsp. indica (Rice), this protein is Zinc finger A20 and AN1 domain-containing stress-associated protein 8 (SAP8).